Consider the following 91-residue polypeptide: MKGNANIKSAIKRVKTNEKRRIQNASVKSALRTAIKQFEAKVENNDAEAAKAAFVEATKKLDKAANKGLIHKNAASRQKSRLAKKLNGLSA.

Residues 72 to 91 (KNAASRQKSRLAKKLNGLSA) are disordered.

Belongs to the bacterial ribosomal protein bS20 family.

Binds directly to 16S ribosomal RNA. This chain is Small ribosomal subunit protein bS20, found in Halalkalibacterium halodurans (strain ATCC BAA-125 / DSM 18197 / FERM 7344 / JCM 9153 / C-125) (Bacillus halodurans).